The chain runs to 290 residues: MVIQKEKKSCGQVVEEWKEFVWNPRTHQFMGRTGTSWAFILLFYLVFYGFLTAMFTLTMWVMLQTVSDHTPKYQDRLATPGLMIRPKTENLDVIVNVSDTESWDQHVQKLNKFLEPYNDSIQAQKNDVCRPGRYYEQPDNGVLNYPKRACQFNRTQLGDCSGIGDPTHYGYSTGQPCVFIKMNRVISFYAGANQSMNVTCVGKRDEDAENLGNFVMFPANGNIDLIYFPYYGKKFHVNYTQPLVAVKFLNVTPNVEVNVECRINAANIATDDERDKFAPRVAFKLRINKT.

The Cytoplasmic portion of the chain corresponds to 1-39; it reads MVIQKEKKSCGQVVEEWKEFVWNPRTHQFMGRTGTSWAF. Residues 40 to 67 traverse the membrane as a helical; Signal-anchor for type II membrane protein segment; that stretch reads ILLFYLVFYGFLTAMFTLTMWVMLQTVS. The Extracellular portion of the chain corresponds to 68–290; the sequence is DHTPKYQDRL…VAFKLRINKT (223 aa). N-linked (GlcNAc...) asparagine glycans are attached at residues asparagine 96 and asparagine 118. Cysteine 129 and cysteine 150 are disulfide-bonded. A glycan (N-linked (GlcNAc...) asparagine) is linked at asparagine 153. An intrachain disulfide couples cysteine 160 to cysteine 177. Residues asparagine 193, asparagine 197, and asparagine 238 are each glycosylated (N-linked (GlcNAc...) asparagine). Residues 193–289 form an immunoglobulin-like region; that stretch reads NQSMNVTCVG…RVAFKLRINK (97 aa). Cysteines 200 and 261 form a disulfide.

The protein belongs to the X(+)/potassium ATPases subunit beta family. In terms of assembly, the sodium/potassium-transporting ATPase is composed of a catalytic alpha subunit, an auxiliary non-catalytic beta subunit and an additional regulatory subunit. Interacts with BSG.

It localises to the cell membrane. In terms of biological role, this is the non-catalytic component of the active enzyme, which catalyzes the hydrolysis of ATP coupled with the exchange of Na(+) and K(+) ions across the plasma membrane. The exact function of the beta-2 subunit is not known. Its function is as follows. Mediates cell adhesion of neurons and astrocytes, and promotes neurite outgrowth. The chain is Sodium/potassium-transporting ATPase subunit beta-2 (ATP1B2) from Bos taurus (Bovine).